We begin with the raw amino-acid sequence, 651 residues long: Epithelial sodium channel subunit beta (651 aa).

Residues 1–50 (MFLKRWFIRALHRLQKGPGYGYSELFVWYCNNTNTHGPKRLIIEGPKKKT) are Cytoplasmic-facing. Residues 51-71 (LWSLFTVTFACLVFWQWGLLI) traverse the membrane as a helical segment. The Extracellular portion of the chain corresponds to 72–541 (QTYLSWGVSV…GGQFGFWMGG (470 aa)). Disulfide bonds link Cys98–Cys281, Cys205–Cys212, Cys258–Cys265, Cys370–Cys457, Cys395–Cys453, Cys399–Cys449, Cys408–Cys435, and Cys410–Cys424. A helical membrane pass occupies residues 542-562 (SVLCIIEFGEVFIDCIWIAVI). Topologically, residues 563-651 (RFVKWYKNRK…TEHHSDSEDL (89 aa)) are cytoplasmic. A disordered region spans residues 612 to 651 (QPPDLYLPTTLEIPGTPPPKYDSLRVHPIDTEHHSDSEDL). The span at 633–651 (DSLRVHPIDTEHHSDSEDL) shows a compositional bias: basic and acidic residues.

The protein belongs to the amiloride-sensitive sodium channel (TC 1.A.6) family. SCNN1B subfamily. In terms of assembly, component of the heterotrimeric epithelial sodium channel (ENaC) composed of an alpha/SCNN1A, a beta/SCNN1B and a gamma/SCNN1G subunit. In terms of tissue distribution, strongly expressed in gill, kidney and rectum and more weakly in brain, eye, liver and muscle.

The protein localises to the apical cell membrane. The protein resides in the cytoplasmic vesicle membrane. The catalysed reaction is Na(+)(in) = Na(+)(out). With respect to regulation, originally identified and characterized by its inhibition by the diuretic drug amiloride. Its function is as follows. This is one of the three pore-forming subunits of the heterotrimeric epithelial sodium channel (ENaC), a critical regulator of sodium balance and fluid homeostasis. ENaC operates in epithelial tissues, where it mediates the electrodiffusion of sodium ions from extracellular fluid through the apical membrane of cells, with water following osmotically. This Neoceratodus forsteri (Australian lungfish) protein is Epithelial sodium channel subunit beta.